Consider the following 304-residue polypeptide: Homoserine dehydrogenase (304 aa).

Residues Y8, N10, V11, R38, R39, and S73 each contribute to the NADP(+) site. Y8 serves as a coordination point for NADPH. V11 and R38 together coordinate NADPH. NAD(+) is bound at residue V11. Residues S73, S74, T100, and K102 each contribute to the NADPH site. Residue S73 participates in NAD(+) binding. NADP(+) is bound by residues T100 and K102. Positions 129 and 133 each coordinate Na(+). Residues G182 and E185 each coordinate NADP(+). L-homoserine contacts are provided by E185 and D196. The active-site Proton donor is the K200. Residue G284 participates in NADP(+) binding. Position 284 (G284) interacts with NADPH. An NAD(+)-binding site is contributed by G284.

The protein belongs to the homoserine dehydrogenase family. Homodimer. A metal cation serves as cofactor. The enzyme is activated by reductive cleavage of the interchain disulfide bond between the two subunits.

It catalyses the reaction L-homoserine + NADP(+) = L-aspartate 4-semialdehyde + NADPH + H(+). It carries out the reaction L-homoserine + NAD(+) = L-aspartate 4-semialdehyde + NADH + H(+). Its pathway is amino-acid biosynthesis; L-methionine biosynthesis via de novo pathway; L-homoserine from L-aspartate: step 3/3. It functions in the pathway amino-acid biosynthesis; L-threonine biosynthesis; L-threonine from L-aspartate: step 3/5. Its activity is regulated as follows. Inhibited by cysteine. In terms of biological role, catalyzes the conversion of L-aspartate-beta-semialdehyde (L-Asa) to L-homoserine (L-Hse), the third step in the biosynthesis of threonine and methionine from aspartate. This is Homoserine dehydrogenase from Sulfurisphaera tokodaii (strain DSM 16993 / JCM 10545 / NBRC 100140 / 7) (Sulfolobus tokodaii).